A 173-amino-acid polypeptide reads, in one-letter code: Protein FAM180A (173 aa).

An N-terminal signal peptide occupies residues 1–17 (MSWKALTILLVFSSTQA).

The protein belongs to the FAM180 family.

It localises to the secreted. The chain is Protein FAM180A (Fam180a) from Mus musculus (Mouse).